The chain runs to 331 residues: Small ribosomal subunit protein uS2 (331 aa).

The protein belongs to the universal ribosomal protein uS2 family.

The chain is Small ribosomal subunit protein uS2 from Bradyrhizobium diazoefficiens (strain JCM 10833 / BCRC 13528 / IAM 13628 / NBRC 14792 / USDA 110).